We begin with the raw amino-acid sequence, 548 residues long: Phenylalanine--tRNA ligase beta subunit (548 aa).

A B5 domain is found at 271-346; the sequence is LSEAAAKLDP…ISIGYEALGP (76 aa). Residues Asp324, Asp330, Glu333, and Asp334 each contribute to the Mg(2+) site.

The protein belongs to the phenylalanyl-tRNA synthetase beta subunit family. Type 2 subfamily. As to quaternary structure, tetramer of two alpha and two beta subunits. The cofactor is Mg(2+).

Its subcellular location is the cytoplasm. It catalyses the reaction tRNA(Phe) + L-phenylalanine + ATP = L-phenylalanyl-tRNA(Phe) + AMP + diphosphate + H(+). The sequence is that of Phenylalanine--tRNA ligase beta subunit from Aeropyrum pernix (strain ATCC 700893 / DSM 11879 / JCM 9820 / NBRC 100138 / K1).